The sequence spans 288 residues: Purine nucleoside phosphorylase (288 aa).

A phosphate-binding site is contributed by 65–66; it reads RN. Met201 serves as a coordination point for substrate. Residue Thr202 coordinates phosphate.

The protein belongs to the PNP/MTAP phosphorylase family. MTAP subfamily. Homotrimer.

The protein resides in the cytoplasm. It localises to the nucleus. The enzyme catalyses a purine D-ribonucleoside + phosphate = a purine nucleobase + alpha-D-ribose 1-phosphate. The protein operates within purine metabolism; purine nucleoside salvage. In terms of biological role, purine nucleoside phosphorylase involved in purine salvage. This is Purine nucleoside phosphorylase from Drosophila pseudoobscura pseudoobscura (Fruit fly).